The following is a 366-amino-acid chain: Phospho-N-acetylmuramoyl-pentapeptide-transferase (366 aa).

10 helical membrane passes run 27 to 47, 71 to 91, 93 to 113, 134 to 154, 174 to 194, 205 to 225, 245 to 265, 268 to 288, 294 to 314, and 343 to 363; these read AALF…INSL, TPTM…LLWA, LSNV…AIGF, LGIE…TALA, FMIN…VGAG, GLAI…AYLA, LAVV…FNAP, AIFM…TVAV, IVMA…IIQV, and QVVI…LSTL.

The protein belongs to the glycosyltransferase 4 family. MraY subfamily. Mg(2+) is required as a cofactor.

The protein resides in the cell inner membrane. It catalyses the reaction UDP-N-acetyl-alpha-D-muramoyl-L-alanyl-gamma-D-glutamyl-meso-2,6-diaminopimeloyl-D-alanyl-D-alanine + di-trans,octa-cis-undecaprenyl phosphate = di-trans,octa-cis-undecaprenyl diphospho-N-acetyl-alpha-D-muramoyl-L-alanyl-D-glutamyl-meso-2,6-diaminopimeloyl-D-alanyl-D-alanine + UMP. Its pathway is cell wall biogenesis; peptidoglycan biosynthesis. Catalyzes the initial step of the lipid cycle reactions in the biosynthesis of the cell wall peptidoglycan: transfers peptidoglycan precursor phospho-MurNAc-pentapeptide from UDP-MurNAc-pentapeptide onto the lipid carrier undecaprenyl phosphate, yielding undecaprenyl-pyrophosphoryl-MurNAc-pentapeptide, known as lipid I. This is Phospho-N-acetylmuramoyl-pentapeptide-transferase from Rhizobium leguminosarum bv. trifolii (strain WSM2304).